The chain runs to 225 residues: NAD(P)H-quinone oxidoreductase subunit K, chloroplastic (225 aa).

[4Fe-4S] cluster contacts are provided by Cys-43, Cys-44, Cys-108, and Cys-139.

This sequence belongs to the complex I 20 kDa subunit family. In terms of assembly, NDH is composed of at least 16 different subunits, 5 of which are encoded in the nucleus. It depends on [4Fe-4S] cluster as a cofactor.

It localises to the plastid. It is found in the chloroplast thylakoid membrane. It carries out the reaction a plastoquinone + NADH + (n+1) H(+)(in) = a plastoquinol + NAD(+) + n H(+)(out). The enzyme catalyses a plastoquinone + NADPH + (n+1) H(+)(in) = a plastoquinol + NADP(+) + n H(+)(out). In terms of biological role, NDH shuttles electrons from NAD(P)H:plastoquinone, via FMN and iron-sulfur (Fe-S) centers, to quinones in the photosynthetic chain and possibly in a chloroplast respiratory chain. The immediate electron acceptor for the enzyme in this species is believed to be plastoquinone. Couples the redox reaction to proton translocation, and thus conserves the redox energy in a proton gradient. The polypeptide is NAD(P)H-quinone oxidoreductase subunit K, chloroplastic (Nicotiana tabacum (Common tobacco)).